The chain runs to 102 residues: ATP-dependent Clp protease adapter protein ClpS (102 aa).

Belongs to the ClpS family. Binds to the N-terminal domain of the chaperone ClpA.

Functionally, involved in the modulation of the specificity of the ClpAP-mediated ATP-dependent protein degradation. This Janthinobacterium sp. (strain Marseille) (Minibacterium massiliensis) protein is ATP-dependent Clp protease adapter protein ClpS.